The sequence spans 427 residues: Enolase (427 aa).

Residue glutamine 163 participates in (2R)-2-phosphoglycerate binding. The Proton donor role is filled by glutamate 205. Aspartate 242, glutamate 287, and aspartate 314 together coordinate Mg(2+). (2R)-2-phosphoglycerate-binding residues include lysine 339, arginine 368, serine 369, and lysine 390. Lysine 339 functions as the Proton acceptor in the catalytic mechanism.

This sequence belongs to the enolase family. Requires Mg(2+) as cofactor.

The protein localises to the cytoplasm. It localises to the secreted. It is found in the cell surface. The catalysed reaction is (2R)-2-phosphoglycerate = phosphoenolpyruvate + H2O. The protein operates within carbohydrate degradation; glycolysis; pyruvate from D-glyceraldehyde 3-phosphate: step 4/5. Its function is as follows. Catalyzes the reversible conversion of 2-phosphoglycerate (2-PG) into phosphoenolpyruvate (PEP). It is essential for the degradation of carbohydrates via glycolysis. This is Enolase from Solibacter usitatus (strain Ellin6076).